We begin with the raw amino-acid sequence, 375 residues long: ATP-sensitive inward rectifier potassium channel 15 (375 aa).

At M1–D60 the chain is on the cytoplasmic side. The helical transmembrane segment at M61–A87 threads the bilayer. The Extracellular portion of the chain corresponds to I88–S113. Positions L114 to Y130 form an intramembrane region, helical; Pore-forming. Positions T127–V132 match the Selectivity filter motif. The Extracellular segment spans residues G131–C139. Residues P140–L165 traverse the membrane as a helical segment. Over A166–V375 the chain is Cytoplasmic.

This sequence belongs to the inward rectifier-type potassium channel (TC 1.A.2.1) family. KCNJ15 subfamily. In terms of assembly, can form heteromultimeric channels with Kir5.1/KCNJ16. Interacts with PATJ. In terms of tissue distribution, expressed in the proximal segment of the nephron.

Its subcellular location is the membrane. It localises to the cell membrane. The enzyme catalyses K(+)(in) = K(+)(out). With respect to regulation, channel activity is regulated by variations of cytosolic pH; reversibly inhibited by acidic pH values. Inhibited by Ba(2+) and Cs(+) in a voltage-dependent manner. Its function is as follows. Inward rectifier potassium channels are characterized by a greater tendency to allow potassium to flow into the cell rather than out of it. Their voltage dependence is regulated by the concentration of extracellular potassium; as external potassium is raised, the voltage range of the channel opening shifts to more positive voltages. The inward rectification is mainly due to the blockage of outward current by internal magnesium. The sequence is that of ATP-sensitive inward rectifier potassium channel 15 (Kcnj15) from Mus musculus (Mouse).